Here is a 310-residue protein sequence, read N- to C-terminus: Porphobilinogen deaminase (310 aa).

Cys-242 carries the S-(dipyrrolylmethanemethyl)cysteine modification.

This sequence belongs to the HMBS family. Monomer. Dipyrromethane serves as cofactor.

It carries out the reaction 4 porphobilinogen + H2O = hydroxymethylbilane + 4 NH4(+). It participates in porphyrin-containing compound metabolism; protoporphyrin-IX biosynthesis; coproporphyrinogen-III from 5-aminolevulinate: step 2/4. Its function is as follows. Tetrapolymerization of the monopyrrole PBG into the hydroxymethylbilane pre-uroporphyrinogen in several discrete steps. The polypeptide is Porphobilinogen deaminase (Shewanella halifaxensis (strain HAW-EB4)).